The primary structure comprises 150 residues: Deoxyuridine 5'-triphosphate nucleotidohydrolase (150 aa).

Residues 69 to 71, asparagine 82, 86 to 88, and methionine 96 each bind substrate; these read RSG and LID.

It belongs to the dUTPase family. Mg(2+) is required as a cofactor.

It carries out the reaction dUTP + H2O = dUMP + diphosphate + H(+). The protein operates within pyrimidine metabolism; dUMP biosynthesis; dUMP from dCTP (dUTP route): step 2/2. This enzyme is involved in nucleotide metabolism: it produces dUMP, the immediate precursor of thymidine nucleotides and it decreases the intracellular concentration of dUTP so that uracil cannot be incorporated into DNA. The sequence is that of Deoxyuridine 5'-triphosphate nucleotidohydrolase from Alcanivorax borkumensis (strain ATCC 700651 / DSM 11573 / NCIMB 13689 / SK2).